The sequence spans 268 residues: Cytochrome b-c1 complex subunit Rieske-3, mitochondrial (268 aa).

The N-terminal 56 residues, 1–56 (MLRIAGRKLSSSAATRSSSAFFTRNPFTFTDDSSSPARSPSPASLASQFLDQFRGF), are a transit peptide targeting the mitochondrion. Residues 57-105 (SSNSVSPAHQTGLVSDLPATVAAIKNPSSKIVYDDSNHERYPPGDPSKR) lie on the Mitochondrial matrix side of the membrane. Residues 106–128 (AFAYFVLTGGRFVYASLVRLLIL) form a helical membrane-spanning segment. Residues 129–268 (KFVLSMSASK…FMEENKLLIG (140 aa)) are Mitochondrial intermembrane-facing. A Rieske domain is found at 178–266 (INLANSVDLG…YSFMEENKLL (89 aa)). [2Fe-2S] cluster-binding residues include Cys-211, His-213, Cys-230, and His-233. A disulfide bridge connects residues Cys-216 and Cys-232.

Belongs to the Rieske iron-sulfur protein family. As to quaternary structure, component of the ubiquinol-cytochrome c oxidoreductase (cytochrome b-c1 complex, complex III, CIII), a multisubunit enzyme composed of 3 respiratory subunits cytochrome b, cytochrome c1 and Rieske protein, 2 core protein subunits, and several low-molecular weight protein subunits. The complex exists as an obligatory dimer and forms supercomplexes (SCs) in the inner mitochondrial membrane with cytochrome c oxidase (complex IV, CIV). [2Fe-2S] cluster serves as cofactor. As to expression, high levels are seen in the flowers while a low level expression is seen in the roots, leaves and stems.

Its subcellular location is the mitochondrion inner membrane. It catalyses the reaction a quinol + 2 Fe(III)-[cytochrome c](out) = a quinone + 2 Fe(II)-[cytochrome c](out) + 2 H(+)(out). In terms of biological role, component of the ubiquinol-cytochrome c oxidoreductase, a multisubunit transmembrane complex that is part of the mitochondrial electron transport chain which drives oxidative phosphorylation. The respiratory chain contains 3 multisubunit complexes succinate dehydrogenase (complex II, CII), ubiquinol-cytochrome c oxidoreductase (cytochrome b-c1 complex, complex III, CIII) and cytochrome c oxidase (complex IV, CIV), that cooperate to transfer electrons derived from NADH and succinate to molecular oxygen, creating an electrochemical gradient over the inner membrane that drives transmembrane transport and the ATP synthase. The cytochrome b-c1 complex catalyzes electron transfer from ubiquinol to cytochrome c, linking this redox reaction to translocation of protons across the mitochondrial inner membrane, with protons being carried across the membrane as hydrogens on the quinol. In the process called Q cycle, 2 protons are consumed from the matrix, 4 protons are released into the intermembrane space and 2 electrons are passed to cytochrome c. The Rieske protein is a catalytic core subunit containing a [2Fe-2S] iron-sulfur cluster. It cycles between 2 conformational states during catalysis to transfer electrons from the quinol bound in the Q(0) site in cytochrome b to cytochrome c1. This is Cytochrome b-c1 complex subunit Rieske-3, mitochondrial from Nicotiana tabacum (Common tobacco).